Reading from the N-terminus, the 258-residue chain is Methanol--corrinoid protein (258 aa).

The B12-binding N-terminal domain occupies 30-124 (AEELYPKDEL…NSGATPKTKG (95 aa)). The 126-residue stretch at 123 to 248 (KGTVVCHVAE…DAIIAGTTDV (126 aa)) folds into the B12-binding domain. His-136 contributes to the methylcob(III)alamin binding site.

This sequence belongs to the methylamine corrinoid protein family. Heterotetramer, composed of 2 MtaB and 2 MtaC subunits.

Functionally, harbors a corrinoid prosthetic group and acts as a methyl group carrier in methanogenesis in the methanol pathway. The methyl group of methanol is first transferred to the corrinoid prosthetic group of MtaC in the cob(I)amide oxidation state. This reaction is mediated by MtaB. The methyl group from MtaC is then transferred to coenzyme M by MtaA. This is Methanol--corrinoid protein (mtaC) from Methanosarcina barkeri (strain Fusaro / DSM 804).